Reading from the N-terminus, the 395-residue chain is Elongation factor Tu (395 aa).

The tr-type G domain maps to 10–204 (LPHVNIGTIG…AVDEYIPTPQ (195 aa)). A G1 region spans residues 19 to 26 (GHVDHGKT). 19–26 (GHVDHGKT) provides a ligand contact to GTP. Threonine 26 serves as a coordination point for Mg(2+). The segment at 60 to 64 (GITIN) is G2. Residues 81-84 (DCPG) form a G3 region. GTP contacts are provided by residues 81-85 (DCPGH) and 136-139 (NKCD). A G4 region spans residues 136-139 (NKCD). The segment at 174–176 (SAL) is G5.

It belongs to the TRAFAC class translation factor GTPase superfamily. Classic translation factor GTPase family. EF-Tu/EF-1A subfamily. In terms of assembly, monomer.

It localises to the cytoplasm. The catalysed reaction is GTP + H2O = GDP + phosphate + H(+). Functionally, GTP hydrolase that promotes the GTP-dependent binding of aminoacyl-tRNA to the A-site of ribosomes during protein biosynthesis. This is Elongation factor Tu from Mycoplasma capricolum subsp. capricolum (strain California kid / ATCC 27343 / NCTC 10154).